A 961-amino-acid polypeptide reads, in one-letter code: E3 ubiquitin-protein ligase TRIM37 (961 aa).

An N-acetylmethionine modification is found at Met1. The RING-type; degenerate zinc-finger motif lies at 15-55 (CFICMEKLRDARLCPHCSKLCCFSCIRRWLTEQRAQCPHCR). The segment at 90–132 (NEKDKCENHHEKLSVFCWTCKKCICHQCALWGGMHGGHTFKPL) adopts a B box-type zinc-finger fold. Zn(2+) contacts are provided by Cys95, His98, Cys117, and His124. Positions 132–234 (LAEIYEQHVT…VEHQLRSCSK (103 aa)) form a coiled coil. Positions 276–403 (YDSATFVLEN…NDTVILRFQV (128 aa)) constitute an MATH domain. The stretch at 419-450 (ITQLEAAQTGYIQQINNLKERLTIELSRTQKS) forms a coiled coil. Disordered stretches follow at residues 447–514 (TQKS…HHEL), 529–561 (VNHL…SGEN), 645–665 (SLLQ…KQQA), 776–811 (AVDS…SPRA), and 874–961 (LESH…GGGR). Ser454 is subject to Phosphoserine. The segment covering 504–514 (KIQNEDYHHEL) has biased composition (basic and acidic residues). A compositionally biased stretch (low complexity) spans 535–545 (SSSSASSTATS). Residues 548 to 561 (EENDIDEETMSGEN) show a composition bias toward acidic residues. Positions 776 to 787 (AVDSGENSRSKG) are enriched in basic and acidic residues. Over residues 795–806 (GSSGSSQSGSRH) the composition is skewed to low complexity. The span at 903–915 (SDIECDTENEEQE) shows a compositional bias: acidic residues.

This sequence belongs to the TRIM/RBCC family. In terms of assembly, associates with the PRC2/EED-EZH2 complex. In terms of processing, auto-ubiquitinated. As to expression, highly expressed in testis and brain. In embryonic tissues, expressed in epithelia, including ducts of the developing pancreas, epithelium of the midgut and nasal epithelium. In adult, detected in the central and peripheral nervous systems, including enteric ganglia, retina and the adrenal medulla (at protein level).

Its subcellular location is the chromosome. The protein resides in the cytoplasm. It localises to the perinuclear region. The protein localises to the peroxisome membrane. The catalysed reaction is S-ubiquitinyl-[E2 ubiquitin-conjugating enzyme]-L-cysteine + [acceptor protein]-L-lysine = [E2 ubiquitin-conjugating enzyme]-L-cysteine + N(6)-ubiquitinyl-[acceptor protein]-L-lysine.. The protein operates within protein modification; protein ubiquitination. Its function is as follows. E3 ubiquitin-protein ligase required to prevent centriole reduplication. Probably acts by ubiquitinating positive regulators of centriole reduplication. Mediates monoubiquitination of 'Lys-119' of histone H2A (H2AK119Ub), a specific tag for epigenetic transcriptional repression: associates with some Polycomb group (PcG) multiprotein PRC2-like complex and mediates repression of target genes. Also acts as a positive regulator of peroxisome import by mediating monoubiquitination of PEX5 at 'Lys-472': monoubiquitination promotes PEX5 stabilitation by preventing its polyubiquitination and degradation by the proteasome. In Mus musculus (Mouse), this protein is E3 ubiquitin-protein ligase TRIM37.